We begin with the raw amino-acid sequence, 70 residues long: NAD(P)H-quinone oxidoreductase subunit L (70 aa).

2 helical membrane-spanning segments follow: residues 2–22 (IVPL…PVAL) and 39–59 (TFMY…SPFV).

The protein belongs to the complex I NdhL subunit family. In terms of assembly, NDH-1 can be composed of about 15 different subunits; different subcomplexes with different compositions have been identified which probably have different functions.

It is found in the cellular thylakoid membrane. The enzyme catalyses a plastoquinone + NADH + (n+1) H(+)(in) = a plastoquinol + NAD(+) + n H(+)(out). It catalyses the reaction a plastoquinone + NADPH + (n+1) H(+)(in) = a plastoquinol + NADP(+) + n H(+)(out). NDH-1 shuttles electrons from an unknown electron donor, via FMN and iron-sulfur (Fe-S) centers, to quinones in the respiratory and/or the photosynthetic chain. The immediate electron acceptor for the enzyme in this species is believed to be plastoquinone. Couples the redox reaction to proton translocation, and thus conserves the redox energy in a proton gradient. Cyanobacterial NDH-1 also plays a role in inorganic carbon-concentration. This Trichormus variabilis (strain ATCC 29413 / PCC 7937) (Anabaena variabilis) protein is NAD(P)H-quinone oxidoreductase subunit L.